The primary structure comprises 318 residues: Bis(5'-nucleosyl)-tetraphosphatase, symmetrical (318 aa).

Residues 269-318 form a disordered region; the sequence is PGREVTGPAPVARAPRRPRERLGRQRSRGNRGNAGNTAVPAKPPVDTPQD. The span at 282-297 shows a compositional bias: basic residues; that stretch reads APRRPRERLGRQRSRG. Residues 309-318 are compositionally biased toward pro residues; it reads AKPPVDTPQD.

This sequence belongs to the Ap4A hydrolase family.

The catalysed reaction is P(1),P(4)-bis(5'-adenosyl) tetraphosphate + H2O = 2 ADP + 2 H(+). In terms of biological role, hydrolyzes diadenosine 5',5'''-P1,P4-tetraphosphate to yield ADP. This chain is Bis(5'-nucleosyl)-tetraphosphatase, symmetrical, found in Xanthomonas oryzae pv. oryzae (strain PXO99A).